The sequence spans 146 residues: Snaclec rhodocytin subunit beta (146 aa).

The signal sequence occupies residues 1 to 23 (MGRFIFVSFGLLVVFLSLSGTGA). 3 cysteine pairs are disulfide-bonded: C25-C36, C53-C142, and C119-C134. One can recognise a C-type lectin domain in the interval 32–143 (YEGHCYKPFN…CSSTCSFVCK (112 aa)).

It belongs to the snaclec family. Dimer (non-covalently linked) of heterodimers of subunits alpha and beta (disulfide-linked). As to expression, expressed by the venom gland.

It is found in the secreted. Elicits platelet aggregation by the binding to the C-type lectin domain family 1 member B (CLEC1B/CLEC2). Binding leads to tyrosine phosphorylation in the cytoplasmic tail of CLEC1B, which promotes the binding of spleen tyrosine kinase (Syk), subsequent activation of PLCgamma2, and platelet activation and aggregation. Binding to GPIbalpha (GP1BA) and alpha2/beta-1 (ITGA2/ITGB1) may also induce aggregation, but this is controversial. This chain is Snaclec rhodocytin subunit beta, found in Calloselasma rhodostoma (Malayan pit viper).